We begin with the raw amino-acid sequence, 329 residues long: Flotillin-like protein FloA (329 aa).

Transmembrane regions (helical) follow at residues 5–25 (IFLL…LSFI) and 27–47 (LGLW…TLVG).

Belongs to the flotillin-like FloA family. In terms of assembly, homooligomerizes.

It is found in the cell membrane. The protein resides in the membrane raft. Found in functional membrane microdomains (FMM) that may be equivalent to eukaryotic membrane rafts. FMMs are highly dynamic and increase in number as cells age. Flotillins are thought to be important factors in membrane fluidity. This Thermoanaerobacter sp. (strain X514) protein is Flotillin-like protein FloA.